Here is a 412-residue protein sequence, read N- to C-terminus: MIPRIVVVLLSVLAVVTARRSYEGYKVYGIVPESPDEAEILYQIRQSNPDLDFWHLTKQPGDEARVLVAPKDQRSFLIKLIRHGLHYQEVISDVEGTLAPYNEPRTRGMSLDRDVSTSYLRHNEINEYLQTLSQKYPSLVSVEEAGTSYEGRSIKTITINKKPGNAVVFLDAGIHAREWIAPATALYAIEQLVEHSSENQEVLSNLTWVIMPVVNPDGYEFSHETDRFWRKTRKPTGKTCKGTDGNRNFDYHWGEVGASTQACADTFRGETAFSEPETRAVRDAVMKLKGSCKFYLSLHSYGNYILYPWGWTSKLPETWEAIDEVAQAGAEAIKQSTGSRYTVGSSTNVLYAAAGGSDDWAFAVAEVPISITMELPGGGNGGFNPPPSSIEKIVNESWVGIKAMALKVAQMF.

A signal peptide spans methionine 1–alanine 18. A propeptide spans arginine 19–serine 75 (activation peptide). A Peptidase M14 domain is found at serine 118–valine 408. Residues histidine 175 and glutamate 178 each coordinate Zn(2+). Histidine 175 to glutamate 178 contacts a peptide. Asparagine 205 carries N-linked (GlcNAc...) asparagine glycosylation. A peptide-binding positions include arginine 230 and asparagine 246 to arginine 247. A disulfide bridge links cysteine 240 with cysteine 263. Histidine 299 lines the Zn(2+) pocket. A peptide is bound by residues serine 300–tyrosine 301 and tyrosine 351. Catalysis depends on glutamate 374, which acts as the Proton donor/acceptor. An N-linked (GlcNAc...) asparagine glycan is attached at asparagine 395.

It belongs to the peptidase M14 family. Monomer. Interacts with Dengue virus type 2 (DENV2, MY89-88549 strain) envelope protein E. Interacts with Dengue virus envelope protein E type 3, type 2, type 4 and type 1 with decreasing strength. The cofactor is Zn(2+). In terms of tissue distribution, expressed in midgut (at protein level).

The protein resides in the endoplasmic reticulum. The catalysed reaction is Preferential release of a C-terminal lysine or arginine amino acid.. Inhibited by S.tuberosum metallocarboxypeptidase inhibitor. Functionally, carboxypeptidase that preferentially hydrolyzes arginine and lysine residues at the C-terminus. During infection by dengue virus, may play a role in preventing viral packaging, maturation, and release from the midgut. This is Carboxypeptidase B1 from Aedes aegypti (Yellowfever mosquito).